Consider the following 82-residue polypeptide: Small ribosomal subunit protein uS17 (82 aa).

It belongs to the universal ribosomal protein uS17 family. As to quaternary structure, part of the 30S ribosomal subunit.

Functionally, one of the primary rRNA binding proteins, it binds specifically to the 5'-end of 16S ribosomal RNA. In Aeromonas hydrophila subsp. hydrophila (strain ATCC 7966 / DSM 30187 / BCRC 13018 / CCUG 14551 / JCM 1027 / KCTC 2358 / NCIMB 9240 / NCTC 8049), this protein is Small ribosomal subunit protein uS17.